The primary structure comprises 137 residues: Large ribosomal subunit protein uL16 (137 aa).

It belongs to the universal ribosomal protein uL16 family. Part of the 50S ribosomal subunit.

In terms of biological role, binds 23S rRNA and is also seen to make contacts with the A and possibly P site tRNAs. The sequence is that of Large ribosomal subunit protein uL16 from Stenotrophomonas maltophilia (strain R551-3).